Here is a 497-residue protein sequence, read N- to C-terminus: Tryptophan decarboxylase 2 (497 aa).

Residues alanine 162, serine 163, threonine 257, and asparagine 311 each contribute to the pyridoxal 5'-phosphate site. Lysine 314 is subject to N6-(pyridoxal phosphate)lysine.

Belongs to the group II decarboxylase family. The cofactor is pyridoxal 5'-phosphate.

The catalysed reaction is L-tryptophan + H(+) = tryptamine + CO2. Involved in serotonin biosynthesis. Catalyzes the decarboxylation of L-tryptophan to tryptamine, which is converted to serotonin by tryptamine 5-hydroxylase. May play a minor role in serotonin biosynthetis during senescence. Accumulation of serotonin attenuates leaf senescence. This Oryza sativa subsp. japonica (Rice) protein is Tryptophan decarboxylase 2.